We begin with the raw amino-acid sequence, 339 residues long: uncharacterized protein (339 aa).

Residues 13 to 243 (LSLNKLDVGF…PATPFICEFI (231 aa)) form the ABC transporter domain. 45-52 (GPSGSGKS) is a binding site for ATP.

The protein belongs to the ABC transporter superfamily.

It localises to the cell inner membrane. Its function is as follows. Probably part of a binding-protein-dependent transport system y4fNOP. Probably responsible for energy coupling to the transport system. This is an uncharacterized protein from Sinorhizobium fredii (strain NBRC 101917 / NGR234).